A 137-amino-acid chain; its full sequence is Large ribosomal subunit protein uL16 (137 aa).

The protein belongs to the universal ribosomal protein uL16 family. Part of the 50S ribosomal subunit.

Binds 23S rRNA and is also seen to make contacts with the A and possibly P site tRNAs. This is Large ribosomal subunit protein uL16 from Allorhizobium ampelinum (strain ATCC BAA-846 / DSM 112012 / S4) (Agrobacterium vitis (strain S4)).